The primary structure comprises 265 residues: Hydroxyethylthiazole kinase 2 (265 aa).

Met-39 lines the substrate pocket. ATP is bound by residues Lys-115 and Thr-168. Gly-195 is a substrate binding site.

This sequence belongs to the Thz kinase family. Mg(2+) is required as a cofactor.

It catalyses the reaction 5-(2-hydroxyethyl)-4-methylthiazole + ATP = 4-methyl-5-(2-phosphooxyethyl)-thiazole + ADP + H(+). It participates in cofactor biosynthesis; thiamine diphosphate biosynthesis; 4-methyl-5-(2-phosphoethyl)-thiazole from 5-(2-hydroxyethyl)-4-methylthiazole: step 1/1. Catalyzes the phosphorylation of the hydroxyl group of 4-methyl-5-beta-hydroxyethylthiazole (THZ). The sequence is that of Hydroxyethylthiazole kinase 2 from Clostridium botulinum (strain 657 / Type Ba4).